The sequence spans 87 residues: Insertion element IS407 uncharacterized 10.0 kDa protein (87 aa).

This sequence belongs to the transposase 8 family.

In Burkholderia multivorans (strain ATCC 17616 / 249), this protein is Insertion element IS407 uncharacterized 10.0 kDa protein.